We begin with the raw amino-acid sequence, 225 residues long: Nucleolar protein 6 (225 aa).

Residues 1 to 75 (MGSEEDKKLT…GGKGKNGKKG (75 aa)) are disordered. A compositionally biased stretch (basic residues) spans 9-20 (LTKKQLKAQQFR). Over residues 21-42 (KSKEEKDQEKDVKKEQAPEGKR) the composition is skewed to basic and acidic residues. S45 carries the post-translational modification Phosphoserine. Over residues 56-75 (KKKRKTRRGRGGKGKNGKKG) the composition is skewed to basic residues. Residues 78-155 (FIVFVGSLPR…KKINVELTVG (78 aa)) enclose the RRM domain. At S160 the chain carries Phosphoserine. A disordered region spans residues 187 to 225 (NDGNQKKIAKTTATAAQTSGTDNKPVPAGIHPDRAKLLK).

This sequence belongs to the RRM NOP6 family.

The protein resides in the nucleus. The protein localises to the nucleolus. Predicted to be involved in rRNA processing. The sequence is that of Nucleolar protein 6 (NOP6) from Saccharomyces cerevisiae (strain ATCC 204508 / S288c) (Baker's yeast).